A 335-amino-acid chain; its full sequence is MIDQKIFEITLNIDDPANFCTNVEAHLLKELENIYVGKCFKNSFIISITGVIQRSPCFIMRTNNSGRGYMHVRFSALVSYLNAFDLIAAVKIIKNDNNIILGESLLTEPVTIVIPSSESQNNVAEVGQIVPVQLANSSVYYIPGRQQASATGSIFIPKHTFSVYHVQEELTQEQALNLTKLVNVIETLLDSRSKKDFKHICFFEKLYYTYPISSDEILDLKIWKGPKGKEVSRLKPCNVLSFLYDALKNKSSSLGFWARPPDLFKSSPLAYQQDNNSFNTTELPIICSAEVMFVTLLKEIINYLQFMNDLCDTFNNEQLIKRHENIWMLIEQRKI.

This sequence belongs to the Asfivirus DNA-directed RNA polymerase RPB7 homolog family. Part of the viral DNA-directed RNA polymerase that consists of 8 polII-like subunits (RPB1, RPB2, RPB3, RPB5, RPB6, RPB7, RPB9, RPB10), a capping enzyme and a termination factor.

The protein resides in the host cytoplasm. It localises to the virion. Functionally, component of the DNA-directed RNA polymerase (RNAP) that catalyzes the transcription in the cytoplasm of viral DNA into RNA using the four ribonucleoside triphosphates as substrates. The protein is DNA-directed RNA polymerase RPB7 homolog of African swine fever virus (isolate Pig/Kenya/KEN-50/1950) (ASFV).